The following is a 260-amino-acid chain: MATPPKRFCSSPSTSSEGTRIKKISIEGNIAAGKSTFVNILKQVCEDWEVVPEPVARWCNVQSTQDEFEELTTSQKSGGNVLQMMYEKPERWSFIFQSYACLSRIRAQLASLNGSLRDAEKPVLFFERSVYSDRYIFASNLYESDCMNETEWTIYQDWHDWMNSQFGQSLELDGIIYLRATPEKCLNRIYIRGRDEEQGIPLEYLEKLHYKHESWLLHRTLKTNFEYLQEVPILTLDVNLDFKDKEESLVEKVKEFLSTT.

Phosphoserine; by CK1 is present on residues serine 11 and serine 15. Position 28-36 (28-36) interacts with ATP; sequence GNIAAGKST. Glutamate 53 lines the substrate pocket. At threonine 72 the chain carries Phosphothreonine; by CK1. Serine 74 is modified (phosphoserine; by CK1). Substrate is bound by residues tyrosine 86 and glutamine 97. Catalysis depends on glutamate 127, which acts as the Proton acceptor. Substrate-binding residues include arginine 128 and aspartate 133. 188 to 192 serves as a coordination point for ATP; it reads RIYIR. Position 197 (glutamate 197) interacts with substrate. 240-242 is an ATP binding site; it reads LDF.

This sequence belongs to the DCK/DGK family. In terms of assembly, homodimer. Post-translationally, phosphorylated and activated in vitro upon phosphorylation at Ser-74 by CSNK1D/CK1.

It is found in the nucleus. It carries out the reaction 2'-deoxycytidine + a ribonucleoside 5'-triphosphate = dCMP + a ribonucleoside 5'-diphosphate + H(+). The enzyme catalyses 2'-deoxyadenosine + ATP = dAMP + ADP + H(+). It catalyses the reaction 2'-deoxyguanosine + ATP = dGMP + ADP + H(+). Phosphorylates the deoxyribonucleosides deoxycytidine, deoxyguanosine and deoxyadenosine. The chain is Deoxycytidine kinase (Dck) from Rattus norvegicus (Rat).